Here is a 262-residue protein sequence, read N- to C-terminus: Thiamine thiazole synthase (262 aa).

NAD(+) contacts are provided by residues A36, 55–56 (EK), G63, V127, and 154–156 (HVD). Residues D156 and H171 each coordinate Fe cation. M224 is an NAD(+) binding site. R234 lines the glycine pocket.

Belongs to the THI4 family. Homooctamer; tetramer of dimers. It depends on Fe(2+) as a cofactor.

It catalyses the reaction hydrogen sulfide + glycine + NAD(+) = ADP-5-ethyl-4-methylthiazole-2-carboxylate + nicotinamide + 3 H2O + H(+). It functions in the pathway cofactor biosynthesis; thiamine diphosphate biosynthesis. Functionally, involved in the biosynthesis of the thiazole moiety of thiamine. Catalyzes the conversion of NAD and glycine to adenosine diphosphate 5-(2-hydroxyethyl)-4-methylthiazole-2-carboxylate (ADT), an adenylated thiazole intermediate, using free sulfide as a source of sulfur. The sequence is that of Thiamine thiazole synthase from Methanothrix thermoacetophila (strain DSM 6194 / JCM 14653 / NBRC 101360 / PT) (Methanosaeta thermophila).